A 142-amino-acid chain; its full sequence is Transcriptional regulator MraZ (142 aa).

SpoVT-AbrB domains lie at 5–51 and 77–120; these read ASSL…PRPV and ASDV…DAAR.

Belongs to the MraZ family. In terms of assembly, forms oligomers.

The protein resides in the cytoplasm. It localises to the nucleoid. The polypeptide is Transcriptional regulator MraZ (Herminiimonas arsenicoxydans).